A 315-amino-acid chain; its full sequence is Calcium homeostasis modulator protein 4 (315 aa).

Over 1–14 (MSPDLNCISSSLLR) the chain is Cytoplasmic. Residues 15 to 37 (SEPCINSLIAILTVCGQQLFSSY) traverse the membrane as a helical segment. The Extracellular portion of the chain corresponds to 38-48 (TFSCPCQVGKN). 2 cysteine pairs are disulfide-bonded: C41/C132 and C43/C163. A helical transmembrane segment spans residues 49–71 (FYYGSAFLVVPALILLIAGYALR). At 72–104 (GQMWTVASEYCCCSCTPPYRRSSPLERRLACLM) the chain is on the cytoplasmic side. A helical transmembrane segment spans residues 105 to 130 (FFDITGRALVAPLTWLTVTLLTGTYY). The Extracellular portion of the chain corresponds to 131–184 (ECAASEFASVDQYPMFANVTPSKREEMLAGFPCYTSAPSDVIPIRDEVALLHRY). The helical transmembrane segment at 185-208 (QSQMLGWILVVLATIALLLSKCLA) threads the bilayer. Residues 209-315 (RCCSPLTSLQ…DRQEGIEMKP (107 aa)) lie on the Cytoplasmic side of the membrane.

Belongs to the CALHM family. In terms of assembly, oligomerizes to form decameric and undecameric channels. Two hemichannels can assemble in a tail-to-tail manner to form a gap junction.

Its subcellular location is the cell membrane. Its function is as follows. May assemble to form gap junction channel-like structures involved in intercellular communication. Channel gating and ion conductance are likely regulated by membrane lipids rather than by membrane depolarization or extracellular calcium levels. This is Calcium homeostasis modulator protein 4 from Mus musculus (Mouse).